The chain runs to 394 residues: MKTVPFLSLLQAGILTSGIVAQNIAFVGSNANAIATVSFDTKTGTFKVTGNNTDSSTPSWQEVSRDGKLLYSIEETSTEHALTSYSIGQDGKLKKLKSIKGLAGPVSLDMHPTQPIIITANYGSASASAYSSKDNGELTHLGDFMFKMQGKGKVPDRQDAPHPHQALFDPTGKFVLMPDLGSDLIRILKVDAGQKFSVAPPNKVKPGTGPRHGVLYPASDKPRFYYVVGELSNTVTAMSVEYTVETIKLTEIQTLSTLPDGQRGAAGELILSPSGKHLYASNRLDKVFPGSSSVASYTIDQMTGKLKLLEIFNGGVENIRHMSIHPSGKWFVTEGQNSNDIKVFALDPETGKVTPEAKSTLEIEKPVCLQWWHNGAQESEAPEAGTETECEFDD.

An N-terminal signal peptide occupies residues 1 to 21 (MKTVPFLSLLQAGILTSGIVA). An N-linked (GlcNAc...) asparagine glycan is attached at Asn51.

It belongs to the cycloisomerase 2 family.

The protein localises to the secreted. It catalyses the reaction 6-phospho-D-glucono-1,5-lactone + H2O = 6-phospho-D-gluconate + H(+). It participates in carbohydrate degradation; pentose phosphate pathway; D-ribulose 5-phosphate from D-glucose 6-phosphate (oxidative stage): step 2/3. In terms of biological role, catalyzes the hydrolysis of 6-phosphogluconolactone to 6-phosphogluconate. The chain is Probable 6-phosphogluconolactonase ARB_02015 from Arthroderma benhamiae (strain ATCC MYA-4681 / CBS 112371) (Trichophyton mentagrophytes).